Here is a 299-residue protein sequence, read N- to C-terminus: Acetylglutamate kinase (299 aa).

Substrate contacts are provided by residues 68–69 (GG), arginine 90, and asparagine 194.

The protein belongs to the acetylglutamate kinase family. ArgB subfamily.

The protein resides in the cytoplasm. It carries out the reaction N-acetyl-L-glutamate + ATP = N-acetyl-L-glutamyl 5-phosphate + ADP. It participates in amino-acid biosynthesis; L-arginine biosynthesis; N(2)-acetyl-L-ornithine from L-glutamate: step 2/4. Functionally, catalyzes the ATP-dependent phosphorylation of N-acetyl-L-glutamate. The chain is Acetylglutamate kinase from Psychrobacter cryohalolentis (strain ATCC BAA-1226 / DSM 17306 / VKM B-2378 / K5).